Consider the following 345-residue polypeptide: Phosphoribosylformylglycinamidine cyclo-ligase (345 aa).

It belongs to the AIR synthase family.

The protein localises to the cytoplasm. It catalyses the reaction 2-formamido-N(1)-(5-O-phospho-beta-D-ribosyl)acetamidine + ATP = 5-amino-1-(5-phospho-beta-D-ribosyl)imidazole + ADP + phosphate + H(+). It functions in the pathway purine metabolism; IMP biosynthesis via de novo pathway; 5-amino-1-(5-phospho-D-ribosyl)imidazole from N(2)-formyl-N(1)-(5-phospho-D-ribosyl)glycinamide: step 2/2. The protein is Phosphoribosylformylglycinamidine cyclo-ligase of Prochlorococcus marinus (strain MIT 9313).